The chain runs to 79 residues: Small ribosomal subunit protein bS18 (79 aa).

The protein belongs to the bacterial ribosomal protein bS18 family. In terms of assembly, part of the 30S ribosomal subunit. Forms a tight heterodimer with protein bS6.

Functionally, binds as a heterodimer with protein bS6 to the central domain of the 16S rRNA, where it helps stabilize the platform of the 30S subunit. This is Small ribosomal subunit protein bS18 from Micrococcus luteus (strain ATCC 4698 / DSM 20030 / JCM 1464 / CCM 169 / CCUG 5858 / IAM 1056 / NBRC 3333 / NCIMB 9278 / NCTC 2665 / VKM Ac-2230) (Micrococcus lysodeikticus).